Here is a 338-residue protein sequence, read N- to C-terminus: MSDFDSNPFADPDLNNPFKDPSVTQVTRNVPPGLDEYNPFSDSRTPPPGSVKMPNVPNTQPAIMKPTEEHPAYTQITKEHALAQAELLKRQEELERKAAELDRREREMQNLSQHGRKNNWPPLPSNFPVGPCFYQDFSVDIPVEFQKTVKLMYYLWMFHAVTLFLNIFGCLAWFCVDSSRAVDFGLSILWFLLFTPCSFVCWYRPLYGAFRSDSSFRFFVFFFVYICQFAVHVLQAAGFHNWGNCGWISSLTGLNKNIPVGIMMIIIAALFTASAVISLVMFKKVHGLYRTTGASFEKAQQEFATGVMSNKTVQTAAANAASTAATSAAQNAFKGNQM.

Residues 1 to 64 (MSDFDSNPFA…NVPNTQPAIM (64 aa)) are disordered. S2 is modified (N-acetylserine). Phosphoserine is present on S2. Residues 2-155 (SDFDSNPFAD…QKTVKLMYYL (154 aa)) are Cytoplasmic-facing. T45 bears the Phosphothreonine mark. A helical transmembrane segment spans residues 156-176 (WMFHAVTLFLNIFGCLAWFCV). The Lumenal portion of the chain corresponds to 177 to 181 (DSSRA). Residues 182–202 (VDFGLSILWFLLFTPCSFVCW) traverse the membrane as a helical segment. Residues 203 to 218 (YRPLYGAFRSDSSFRF) are Cytoplasmic-facing. A helical transmembrane segment spans residues 219–239 (FVFFFVYICQFAVHVLQAAGF). Over 240–261 (HNWGNCGWISSLTGLNKNIPVG) the chain is Lumenal. The helical transmembrane segment at 262-282 (IMMIIIAALFTASAVISLVMF) threads the bilayer. Residues 283–338 (KKVHGLYRTTGASFEKAQQEFATGVMSNKTVQTAAANAASTAATSAAQNAFKGNQM) are Cytoplasmic-facing.

It belongs to the SCAMP family. In terms of assembly, interacts with SYNRG, ITSN1 and SLC9A7.

The protein localises to the golgi apparatus. It is found in the trans-Golgi network membrane. The protein resides in the recycling endosome membrane. Its function is as follows. Functions in post-Golgi recycling pathways. Acts as a recycling carrier to the cell surface. The polypeptide is Secretory carrier-associated membrane protein 1 (Scamp1) (Mus musculus (Mouse)).